The primary structure comprises 102 residues: Peptide chaperone MftB (102 aa).

This sequence belongs to the peptide chaperone MftB family.

Its function is as follows. Peptide chaperone involved in the biosynthesis of the enzyme cofactor mycofactocin (MFT). Binds MftA and MftC with high affinity, and is essential for MftC activity on MftA, likely via the formation of a ternary complex. Is required for the in vivo ethanol assimilation in M.smegmatis. The protein is Peptide chaperone MftB of Mycolicibacterium smegmatis (strain ATCC 700084 / mc(2)155) (Mycobacterium smegmatis).